The primary structure comprises 159 residues: uncharacterized protein (159 aa).

4 helical membrane-spanning segments follow: residues Leu22 to Ile42, Pro45 to Leu65, Ile80 to Leu100, and Phe104 to Phe124.

The protein localises to the membrane. This is an uncharacterized protein from Schizosaccharomyces pombe (strain 972 / ATCC 24843) (Fission yeast).